Consider the following 98-residue polypeptide: NADH-ubiquinone oxidoreductase chain 4L (98 aa).

3 helical membrane-spanning segments follow: residues 1-21 (MSLV…GLLM), 29-49 (ALLC…ITIL), and 59-79 (TPII…ALLV).

Belongs to the complex I subunit 4L family. As to quaternary structure, core subunit of respiratory chain NADH dehydrogenase (Complex I) which is composed of 45 different subunits.

It localises to the mitochondrion inner membrane. The catalysed reaction is a ubiquinone + NADH + 5 H(+)(in) = a ubiquinol + NAD(+) + 4 H(+)(out). Its function is as follows. Core subunit of the mitochondrial membrane respiratory chain NADH dehydrogenase (Complex I) which catalyzes electron transfer from NADH through the respiratory chain, using ubiquinone as an electron acceptor. Part of the enzyme membrane arm which is embedded in the lipid bilayer and involved in proton translocation. The chain is NADH-ubiquinone oxidoreductase chain 4L (MT-ND4L) from Lipotes vexillifer (Yangtze river dolphin).